Consider the following 253-residue polypeptide: Decarboxylase DEC1 (253 aa).

Lysine 121 serves as the catalytic Schiff-base intermediate with acetoacetate.

Belongs to the ADC family.

Its pathway is mycotoxin biosynthesis. Functionally, decarboxylase; part of the Tox1B locus, one of the 2 loci that mediate the biosynthesis of T-toxin, a family of linear polyketides 37 to 45 carbons in length, of which the major component is 41 carbons, and which leads to high virulence to maize. One of the PKSs (PKS1 or PKS2) could synthesize a precursor, used subsequently by the other PKS as starter unit, to add additional carbons. Variability in the length of the final carbon backbone C35-47 could be achieved by varying the number of condensation cycles, or use of different starter or extender units or might be due to decarboxylation of the penultimate product, catalyzed by DEC1. Additional proteins are required for the biosynthesis of T-toxin, including oxidoreductases RED1, RED2, RED3, LAM1 and OXI1, as well as esterase TOX9. The polypeptide is Decarboxylase DEC1 (Cochliobolus heterostrophus (strain C4 / ATCC 48331 / race T) (Southern corn leaf blight fungus)).